Reading from the N-terminus, the 229-residue chain is Growth factor receptor-bound protein 2 (229 aa).

SH3 domains are found at residues 1-58 and 168-227; these read MEAV…MKPH and QQPT…PVNR. The SH2 domain occupies 60 to 171; sequence WFFGKIPRAK…RATNLLQQPT (112 aa).

The protein resides in the nucleus. The protein localises to the cytoplasm. It localises to the endosome. Its subcellular location is the golgi apparatus. Adapter protein that provides a critical link between cell surface growth factor receptors and the Ras signaling pathway. Promotes meiotic reinitiation during oocyte maturation. The chain is Growth factor receptor-bound protein 2 from Xenopus tropicalis (Western clawed frog).